Here is a 104-residue protein sequence, read N- to C-terminus: Ribonucleotide reductase inhibitor protein SML1 (104 aa).

Position 1 is an N-acetylmethionine (Met1). A disordered region spans residues 43 to 62 (PMLSTQNSMGSSASASASSL). Residues Ser56, Ser58, and Ser60 each carry the phosphoserine; by DUN1 modification.

As to quaternary structure, homodimer; disulfide-linked. Interacts with RNR1. Phosphorylated by DUN1, a downstream effector of the Mec1/Rad53 checkpoint pathway, in response to DNA damage. This promotes ubiquitination of SML1 and targets it for degradation by the 26S proteasome.

It is found in the nucleus. The protein resides in the cytoplasm. Its function is as follows. Strong inhibitor of ribonucleotide reductase (RNR1) and is involved in regulating dNTP production. The protein is Ribonucleotide reductase inhibitor protein SML1 (SML1) of Saccharomyces cerevisiae (strain ATCC 204508 / S288c) (Baker's yeast).